The primary structure comprises 246 residues: Probable transcriptional regulatory protein YebC (246 aa).

The disordered stretch occupies residues 1–20 (MAGHSKWANTRHRKAAQDAK).

This sequence belongs to the TACO1 family.

It localises to the cytoplasm. This chain is Probable transcriptional regulatory protein YebC, found in Shigella dysenteriae serotype 1 (strain Sd197).